The chain runs to 170 residues: Ribosome-binding factor A (170 aa).

The disordered stretch occupies residues 123–170 (AKAGVYAGDEDPYVKPRVIGEDEDDDDEEGDEDGDDVDRSAPGYEPAH). Residues 143-158 (EDEDDDDEEGDEDGDD) are compositionally biased toward acidic residues.

Belongs to the RbfA family. As to quaternary structure, monomer. Binds 30S ribosomal subunits, but not 50S ribosomal subunits or 70S ribosomes.

The protein resides in the cytoplasm. One of several proteins that assist in the late maturation steps of the functional core of the 30S ribosomal subunit. Associates with free 30S ribosomal subunits (but not with 30S subunits that are part of 70S ribosomes or polysomes). Required for efficient processing of 16S rRNA. May interact with the 5'-terminal helix region of 16S rRNA. The sequence is that of Ribosome-binding factor A from Clavibacter sepedonicus (Clavibacter michiganensis subsp. sepedonicus).